The following is a 483-amino-acid chain: Type 2 glycosyltransferase (483 aa).

Residues 21–41 traverse the membrane as a helical segment; sequence AVVYLSALFTPWFTAFCVLWL. Residues 156–158 carry the Dxd motif motif; the sequence is DDD. The short motif at 301 to 305 is the QxxxRW motif element; sequence QCSRW. N-linked (GlcNAc...) asparagine glycosylation occurs at asparagine 313. The next 3 membrane-spanning stretches (helical) occupy residues 336–356, 369–389, and 396–416; these read IATF…ALWW, AIYA…VGLF, and IMFL…KIYA. A glycan (N-linked (GlcNAc...) asparagine) is linked at asparagine 421.

It belongs to the GT2 glycosyltransferase family.

Its subcellular location is the cell membrane. Its function is as follows. Glycosyltransferase that plays an important role in infection-related morphogenesis and pathogenesis. Involved in stress tolerance and hyphal hydrophobicity via its regulation of the expression of nydrophobin MPG1. May regulate growth, pathogenicity, and cell wall integrity (CWI) through glycosylation of heat shock protein SSB1, and other (unidentified) substrates may contribute to conidiation. Candidate proteins as potential substrates of GT2 include several heat shock proteins (SSB1/MGG_02503, MGG_06759 and MGG_06958), two coiled-coil domain-containing proteins (MGG_04321 and MGG_09571), aminopeptidase 2 (MGG_16472), and a nuclease domain-containing protein (MGG_12646). This chain is Type 2 glycosyltransferase, found in Pyricularia oryzae (strain 70-15 / ATCC MYA-4617 / FGSC 8958) (Rice blast fungus).